The sequence spans 121 residues: UPF0102 protein BF0706 (121 aa).

Belongs to the UPF0102 family.

In Bacteroides fragilis (strain YCH46), this protein is UPF0102 protein BF0706.